Consider the following 57-residue polypeptide: UPF0391 membrane protein XC_2938 (57 aa).

2 consecutive transmembrane segments (helical) span residues 4–24 (WAIIFAIIGLIAGALGFGGMA) and 33–53 (FLFWAGIIIAIVLFVLGMTIA).

The protein belongs to the UPF0391 family.

It localises to the cell membrane. The chain is UPF0391 membrane protein XC_2938 from Xanthomonas campestris pv. campestris (strain 8004).